Here is a 120-residue protein sequence, read N- to C-terminus: Large ribosomal subunit protein bL20 (120 aa).

The protein belongs to the bacterial ribosomal protein bL20 family.

Functionally, binds directly to 23S ribosomal RNA and is necessary for the in vitro assembly process of the 50S ribosomal subunit. It is not involved in the protein synthesizing functions of that subunit. This is Large ribosomal subunit protein bL20 from Mesoplasma florum (strain ATCC 33453 / NBRC 100688 / NCTC 11704 / L1) (Acholeplasma florum).